Here is a 466-residue protein sequence, read N- to C-terminus: FBD-associated F-box protein At5g22730 (466 aa).

The 54-residue stretch at 27-80 (EDLISKLPDSLITQILLYLPIKDIVRTSSLSSRWKSLWLLIPRLDLDSEEFQDY) folds into the F-box domain. Positions 385–436 (DEPIIFSSVPRCLVSSLESVEIKKFNGRPAKMEVARYFLENSGVLQKLVLHL) constitute an FBD domain.

The protein is FBD-associated F-box protein At5g22730 of Arabidopsis thaliana (Mouse-ear cress).